The primary structure comprises 478 residues: Receptor-interacting serine/threonine-protein kinase 3 (478 aa).

Ser-2 is subject to Phosphoserine. The 269-residue stretch at Leu-22–Ile-290 folds into the Protein kinase domain. Residues Val-28–Val-36 and Lys-51 contribute to the ATP site. Asp-143 serves as the catalytic Proton acceptor. Ser-165 carries the phosphoserine modification. Thr-185 is subject to Phosphothreonine. Phosphoserine; by autocatalysis is present on Ser-201. Phosphothreonine is present on Thr-228. Ser-229 bears the Phosphoserine; by autocatalysis mark. Position 254 is a phosphothreonine (Thr-254). 2 positions are modified to phosphoserine: Ser-301 and Ser-323. A disordered region spans residues Arg-311–Asp-330. Over residues Ser-313 to Asp-330 the composition is skewed to basic and acidic residues. Thr-335 carries the phosphothreonine modification. Residues Ser-350, Ser-369, and Ser-380 each carry the phosphoserine modification. Residues Glu-362–Asn-429 form a disordered region. The segment covering Ala-376–Gly-385 has biased composition (polar residues). Position 392 is a phosphothreonine (Thr-392). Residues Gln-413–Asn-429 are compositionally biased toward polar residues. An RIP homotypic interaction motif (RHIM) motif is present at residues Leu-437 to Arg-461. Arg-474 carries the post-translational modification Omega-N-methylarginine.

Belongs to the protein kinase superfamily. TKL Ser/Thr protein kinase family. As to quaternary structure, interacts (via RIP homotypic interaction motif) with RIPK1 (via RIP homotypic interaction motif); this interaction induces RIPK1 phosphorylation and formation of a RIPK1-RIPK3 necrosis-inducing complex. Interacts with MLKL; the interaction is direct and triggers necroptosis. Interacts with ZBP1 (via RIP homotypic interaction motif); interaction with ZBP1 activates RIPK3, triggering necroptosis. Upon TNF-induced necrosis, the RIPK1-RIPK3 dimer further interacts with PGAM5 and MLKL; the formation of this complex leads to PGAM5 phosphorylation and increase in PGAM5 phosphatase activity. Binds TRAF2 and is recruited to the TNFR-1 signaling complex. Interacts with PYGL, GLUL and GLUD1; these interactions result in activation of these metabolic enzymes. Interacts with BIRC2/c-IAP1, BIRC3/c-IAP2 and XIAP/BIRC4. Interacts with ARHGEF2. Interacts with PELI1 (via atypical FHA domain); the phosphorylated form at Thr-185 binds preferentially to PELI1. Interacts with BUB1B, TRAF2 and STUB1. Interacts with CASP6. Component of the AIM2 PANoptosome complex, a multiprotein complex that drives inflammatory cell death (PANoptosis). Post-translationally, RIPK1 and RIPK3 undergo reciprocal auto- and trans-phosphorylation. Autophosphorylated following interaction with ZBP1. Phosphorylation of Ser-201 plays a role in the necroptotic function of RIPK3. Autophosphorylates at Thr-228 and Ser-229 following activation by ZBP1: phosphorylation at these sites is a hallmark of necroptosis and is required for binding MLKL. Phosphorylation at Thr-185 is important for its kinase activity, interaction with PELI1 and for its ability to mediate TNF-induced necroptosis. Polyubiquitinated with 'Lys-48' and 'Lys-63'-linked chains by BIRC2/c-IAP1 and BIRC3/c-IAP2, leading to activation of NF-kappa-B. Ubiquitinated by STUB1 leading to its subsequent proteasome-dependent degradation.

It is found in the cytoplasm. The protein resides in the cytosol. Its subcellular location is the nucleus. The catalysed reaction is L-seryl-[protein] + ATP = O-phospho-L-seryl-[protein] + ADP + H(+). The enzyme catalyses L-threonyl-[protein] + ATP = O-phospho-L-threonyl-[protein] + ADP + H(+). Activity is stimulated by ZBP1, which senses double-stranded Z-RNA structures. RIPK3-dependent necroptosis is inhibited by RIPK1: RIPK1 prevents the ZBP1-induced activation of RIPK3 via FADD-mediated recruitment of CASP8, which cleaves RIPK1 and limits TNF-induced necroptosis. Functionally, serine/threonine-protein kinase that activates necroptosis and apoptosis, two parallel forms of cell death. Necroptosis, a programmed cell death process in response to death-inducing TNF-alpha family members, is triggered by RIPK3 following activation by ZBP1. Activated RIPK3 forms a necrosis-inducing complex and mediates phosphorylation of MLKL, promoting MLKL localization to the plasma membrane and execution of programmed necrosis characterized by calcium influx and plasma membrane damage. In addition to TNF-induced necroptosis, necroptosis can also take place in the nucleus in response to orthomyxoviruses infection: following ZBP1 activation, which senses double-stranded Z-RNA structures, nuclear RIPK3 catalyzes phosphorylation and activation of MLKL, promoting disruption of the nuclear envelope and leakage of cellular DNA into the cytosol. Also regulates apoptosis: apoptosis depends on RIPK1, FADD and CASP8, and is independent of MLKL and RIPK3 kinase activity. Phosphorylates RIPK1: RIPK1 and RIPK3 undergo reciprocal auto- and trans-phosphorylation. In some cell types, also able to restrict viral replication by promoting cell death-independent responses. In response to flavivirus infection in neurons, promotes a cell death-independent pathway that restricts viral replication: together with ZBP1, promotes a death-independent transcriptional program that modifies the cellular metabolism via up-regulation expression of the enzyme ACOD1/IRG1 and production of the metabolite itaconate. Itaconate inhibits the activity of succinate dehydrogenase, generating a metabolic state in neurons that suppresses replication of viral genomes. RIPK3 binds to and enhances the activity of three metabolic enzymes: GLUL, GLUD1, and PYGL. These metabolic enzymes may eventually stimulate the tricarboxylic acid cycle and oxidative phosphorylation, which could result in enhanced ROS production. In Rattus norvegicus (Rat), this protein is Receptor-interacting serine/threonine-protein kinase 3.